Here is a 241-residue protein sequence, read N- to C-terminus: Uridylate kinase (241 aa).

14-17 serves as a coordination point for ATP; the sequence is KASG. The interval 22-27 is involved in allosteric activation by GTP; that stretch reads GDQGFG. UMP is bound at residue Gly56. 2 residues coordinate ATP: Gly57 and Arg61. Residues Asp76 and 137 to 144 each bind UMP; that span reads TGNPFFTT. Thr164, Gln165, Tyr170, and Asp173 together coordinate ATP.

Belongs to the UMP kinase family. Homohexamer.

It is found in the cytoplasm. It catalyses the reaction UMP + ATP = UDP + ADP. It participates in pyrimidine metabolism; CTP biosynthesis via de novo pathway; UDP from UMP (UMPK route): step 1/1. Its activity is regulated as follows. Allosterically activated by GTP. Inhibited by UTP. Its function is as follows. Catalyzes the reversible phosphorylation of UMP to UDP. This Agrobacterium fabrum (strain C58 / ATCC 33970) (Agrobacterium tumefaciens (strain C58)) protein is Uridylate kinase.